Here is a 1446-residue protein sequence, read N- to C-terminus: Bud site selection protein 4 (1446 aa).

Disordered regions lie at residues 69 to 103 (NQWN…TNLL), 358 to 385 (VSEE…NPSS), 425 to 446 (DNNI…SGKE), 495 to 525 (ASED…QNLE), 823 to 844 (SSSL…SQAF), and 1025 to 1044 (KKNT…RVSS). Over residues 86–98 (NYDDDEEQGDESD) the composition is skewed to acidic residues. Polar residues-rich tracts occupy residues 425-434 (DNNISKSAND) and 495-524 (ASED…QQNL). Basic and acidic residues predominate over residues 1028–1044 (TQKDLKDGTTAEKRVSS). The 112-residue stretch at 1314 to 1425 (DITKEGYLLQ…WYMKLKEVVE (112 aa)) folds into the PH domain.

The protein belongs to the BUD4 family.

The protein localises to the bud neck. Functionally, required for selection of future bud sites. Cooperates with other bud site selection proteins to recognize a spatial landmark during mitosis and they subsequently become a landmark for downstream polarity establishment factors that coordinate budding and cytokinesis. Involved in the septin organization at the bud neck. The polypeptide is Bud site selection protein 4 (BUD4) (Candida glabrata (strain ATCC 2001 / BCRC 20586 / JCM 3761 / NBRC 0622 / NRRL Y-65 / CBS 138) (Yeast)).